The following is a 250-amino-acid chain: ATP synthase subunit a (250 aa).

The next 6 membrane-spanning stretches (helical) occupy residues 29–49 (ASLFMAASAAVAVGFLYFATS), 84–104 (FFPLVFSLFMFVLTANLLGMF), 114–134 (IIVTFALAILVIGTVLVYGFY), 143–163 (VFVPSGVPGILLPLVVAIEII), 193–213 (FVASLGALGAVGVGGAVLPLI), and 216–236 (VALTGLEFLVAFLQAYVFAVL).

The protein belongs to the ATPase A chain family. As to quaternary structure, F-type ATPases have 2 components, CF(1) - the catalytic core - and CF(0) - the membrane proton channel. CF(1) has five subunits: alpha(3), beta(3), gamma(1), delta(1), epsilon(1). CF(0) has three main subunits: a(1), b(2) and c(9-12). The alpha and beta chains form an alternating ring which encloses part of the gamma chain. CF(1) is attached to CF(0) by a central stalk formed by the gamma and epsilon chains, while a peripheral stalk is formed by the delta and b chains.

The protein resides in the cell inner membrane. Functionally, key component of the proton channel; it plays a direct role in the translocation of protons across the membrane. The protein is ATP synthase subunit a of Rhizobium etli (strain CIAT 652).